Reading from the N-terminus, the 151-residue chain is Macrodomain Ter protein (151 aa).

The protein belongs to the MatP family. As to quaternary structure, homodimer.

The protein localises to the cytoplasm. Its function is as follows. Required for spatial organization of the terminus region of the chromosome (Ter macrodomain) during the cell cycle. Prevents early segregation of duplicated Ter macrodomains during cell division. Binds specifically to matS, which is a 13 bp signature motif repeated within the Ter macrodomain. The sequence is that of Macrodomain Ter protein from Vibrio atlanticus (strain LGP32) (Vibrio splendidus (strain Mel32)).